The sequence spans 287 residues: MEMO1 family protein MJ0403 (287 aa).

It belongs to the MEMO1 family.

The protein is MEMO1 family protein MJ0403 of Methanocaldococcus jannaschii (strain ATCC 43067 / DSM 2661 / JAL-1 / JCM 10045 / NBRC 100440) (Methanococcus jannaschii).